The sequence spans 506 residues: Probable E3 ubiquitin-protein ligase ARI14 (506 aa).

A TRIAD supradomain region spans residues 79–308 (PDSSSEISLE…VDSGFCIKTE (230 aa)). Residues 83 to 140 (SEISLETDVYEFDGDNDLISMPFCSHKFDSKYWREYLEKNFYYVEKIQTTISCPDQDC) form an RING-type 1 zinc finger. Residues Cys106, His108, Cys135, Cys140, Cys180, Cys185, Cys207, Cys209, Cys214, Cys217, His222, Cys227, Cys258, Cys261, Cys277, Cys279, Cys284, Cys287, His294, and Cys304 each contribute to the Zn(2+) site. The IBR-type zinc-finger motif lies at 158–227 (EMYERYIWRS…RLESHRPVSC (70 aa)). The segment at 258 to 287 (CPHCLCSLESDTKMPQFLTCVCRLRFCSRC) adopts an RING-type 2; atypical zinc-finger fold. Residues 462–492 (GTGPFWYCDRCTYANTWEDNECEMCYDDSAS) form a RanBP2-type zinc finger.

It belongs to the RBR family. Ariadne subfamily. It depends on Zn(2+) as a cofactor. Mostly expressed in closed flowers and, to a lower extent, in pollen.

The catalysed reaction is [E2 ubiquitin-conjugating enzyme]-S-ubiquitinyl-L-cysteine + [acceptor protein]-L-lysine = [E2 ubiquitin-conjugating enzyme]-L-cysteine + [acceptor protein]-N(6)-ubiquitinyl-L-lysine.. Its pathway is protein modification; protein ubiquitination. Functionally, might act as an E3 ubiquitin-protein ligase, or as part of E3 complex, which accepts ubiquitin from specific E2 ubiquitin-conjugating enzymes and then transfers it to substrates. Negatively regulates male gametophyte formation and double fertilization. This is Probable E3 ubiquitin-protein ligase ARI14 from Arabidopsis thaliana (Mouse-ear cress).